Reading from the N-terminus, the 84-residue chain is Large ribosomal subunit protein bL27 (84 aa).

A disordered region spans residues 1-25; that stretch reads MSHKKAGGSTRNGRDSNAQRRGVKK.

This sequence belongs to the bacterial ribosomal protein bL27 family.

The polypeptide is Large ribosomal subunit protein bL27 (Desulforapulum autotrophicum (strain ATCC 43914 / DSM 3382 / VKM B-1955 / HRM2) (Desulfobacterium autotrophicum)).